A 287-amino-acid chain; its full sequence is Inorganic pyrophosphatase (287 aa).

Arg79 is a binding site for diphosphate. Mg(2+) contacts are provided by Asp116, Asp121, and Asp153.

This sequence belongs to the PPase family. Mg(2+) serves as cofactor.

The protein resides in the cytoplasm. It catalyses the reaction diphosphate + H2O = 2 phosphate + H(+). The polypeptide is Inorganic pyrophosphatase (IPP1) (Zygosaccharomyces bailii).